The sequence spans 288 residues: Pyruvate synthase subunit PorB (288 aa).

Residues Cys-16, Cys-19, and Cys-44 each contribute to the [4Fe-4S] cluster site. Residues 137–148 (STPYGASTTTSP) are compositionally biased toward polar residues. Positions 137 to 159 (STPYGASTTTSPHGKESFGEDRP) are disordered. Over residues 149–159 (HGKESFGEDRP) the composition is skewed to basic and acidic residues. Cys-208 serves as a coordination point for [4Fe-4S] cluster.

In terms of assembly, heterotetramer of one alpha, one beta, one delta and one gamma chain. [4Fe-4S] cluster serves as cofactor.

It catalyses the reaction 2 oxidized [2Fe-2S]-[ferredoxin] + pyruvate + CoA = 2 reduced [2Fe-2S]-[ferredoxin] + acetyl-CoA + CO2 + H(+). The sequence is that of Pyruvate synthase subunit PorB (porB) from Methanothermobacter marburgensis (strain ATCC BAA-927 / DSM 2133 / JCM 14651 / NBRC 100331 / OCM 82 / Marburg) (Methanobacterium thermoautotrophicum).